Consider the following 351-residue polypeptide: tRNA pseudouridine synthase D (351 aa).

Asp-96 serves as the catalytic Nucleophile. The 131-residue stretch at Gly-174 to Ala-304 folds into the TRUD domain. The interval Val-244 to Ala-268 is disordered.

The protein belongs to the pseudouridine synthase TruD family.

It catalyses the reaction uridine(13) in tRNA = pseudouridine(13) in tRNA. Functionally, responsible for synthesis of pseudouridine from uracil-13 in transfer RNAs. This is tRNA pseudouridine synthase D from Marinobacter nauticus (strain ATCC 700491 / DSM 11845 / VT8) (Marinobacter aquaeolei).